The chain runs to 235 residues: Uracil-DNA glycosylase (235 aa).

Catalysis depends on D71, which acts as the Proton acceptor.

The protein belongs to the uracil-DNA glycosylase (UDG) superfamily. UNG family.

It localises to the cytoplasm. The catalysed reaction is Hydrolyzes single-stranded DNA or mismatched double-stranded DNA and polynucleotides, releasing free uracil.. Functionally, excises uracil residues from the DNA which can arise as a result of misincorporation of dUMP residues by DNA polymerase or due to deamination of cytosine. The protein is Uracil-DNA glycosylase of Helicobacter hepaticus (strain ATCC 51449 / 3B1).